Consider the following 925-residue polypeptide: ETO1-like protein 2 (925 aa).

In terms of domain architecture, BTB spans 207 to 307 (SDISFCVGSE…ECEARLAASV (101 aa)). Residues 409-442 (ALSLHQMGCVLFERKDYKAAQFHFRLASSLGHVY) form a TPR 1 repeat. A coiled-coil region spans residues 509–533 (KYRAVMKFEQKQIKEAFQEIDRLIQ). TPR repeat units follow at residues 538–571 (PECL…EPNY), 664–697 (AERL…QRSF), 738–771 (GQAL…KHIR), 773–803 (RQGL…SCSK), 834–867 (TYPY…RPEL), and 869–900 (TLHL…DPNH).

The protein belongs to the ETO1 family. As to quaternary structure, interacts with the C-terminal domain of ACS5. Constitutively expressed in green and etiolated seedlings.

It participates in protein modification; protein ubiquitination. Its function is as follows. Potential regulator of the ethylene pathway, which acts by regulating the stability of 1-aminocyclopropane-1-carboxylate synthase (ACS) enzymes. May act as a substrate-specific adapter that connects ACS enzymes, such as ACS5, to ubiquitin ligase complexes, leading to proteasomal degradation of ACS enzymes. This chain is ETO1-like protein 2 (EOL2), found in Arabidopsis thaliana (Mouse-ear cress).